Here is a 461-residue protein sequence, read N- to C-terminus: L-seryl-tRNA(Sec) selenium transferase (461 aa).

K294 is subject to N6-(pyridoxal phosphate)lysine.

Belongs to the SelA family. Requires pyridoxal 5'-phosphate as cofactor.

The protein localises to the cytoplasm. It carries out the reaction L-seryl-tRNA(Sec) + selenophosphate + H(+) = L-selenocysteinyl-tRNA(Sec) + phosphate. The protein operates within aminoacyl-tRNA biosynthesis; selenocysteinyl-tRNA(Sec) biosynthesis; selenocysteinyl-tRNA(Sec) from L-seryl-tRNA(Sec) (bacterial route): step 1/1. Its function is as follows. Converts seryl-tRNA(Sec) to selenocysteinyl-tRNA(Sec) required for selenoprotein biosynthesis. This chain is L-seryl-tRNA(Sec) selenium transferase, found in Actinobacillus pleuropneumoniae serotype 7 (strain AP76).